Reading from the N-terminus, the 295-residue chain is Thioredoxin-related transmembrane protein 2 (295 aa).

The N-terminal stretch at 1–48 (MAVLAPLIALVYSVPRLSRWLARPYCLLSALLSIAFLLVRKLPPICNG) is a signal peptide. The Extracellular segment spans residues 49–102 (LPTQREDGNPCDFDWREVEILMFLSAIVMMKNRRSITVEQHVGNIFMFSKVANA). The helical transmembrane segment at 103 to 125 (ILFFRLDIRMGLLYLTLCIVFLM) threads the bilayer. The Thioredoxin domain maps to 114-269 (LLYLTLCIVF…LYQRAKKHSK (156 aa)). The Cytoplasmic segment spans residues 126 to 295 (TCKPPLYMGP…VPDGENKKDK (170 aa)). Serine 211 and serine 243 each carry phosphoserine. A disordered region spans residues 266–295 (KHSKGGDMSEEKPVDPAPTTVPDGENKKDK). Basic and acidic residues predominate over residues 269-279 (KGGDMSEEKPV). Positions 292 to 295 (KKDK) match the Di-lysine motif motif.

Monomer. Homodimer; disulfide-linked. Occurs in both reduced and oxidized monomeric form. Oxidative conditions increase homodimerization. Interacts with CANX. Interacts with ATP2A2.

Its subcellular location is the endoplasmic reticulum membrane. The protein resides in the mitochondrion membrane. In terms of biological role, endoplasmic reticulum and mitochondria-associated protein that probably functions as a regulator of cellular redox state and thereby regulates protein post-translational modification, protein folding and mitochondrial activity. Indirectly regulates neuronal proliferation, migration, and organization in the developing brain. In Mus musculus (Mouse), this protein is Thioredoxin-related transmembrane protein 2 (Tmx2).